The chain runs to 196 residues: Lipoprotein signal peptidase (196 aa).

3 helical membrane-spanning segments follow: residues 17-37 (SIIITLVIIDQLSKWWFIDNL), 73-93 (SNAIFLITNTLIVCYLYYLMI), and 96-116 (NTIGSFAGYSFVIGGAVGNLI). Residues D126 and D144 contribute to the active site. Residues 135-155 (YSFPVFNLADCFITIGVIILI) form a helical membrane-spanning segment.

Belongs to the peptidase A8 family.

Its subcellular location is the cell inner membrane. It catalyses the reaction Release of signal peptides from bacterial membrane prolipoproteins. Hydrolyzes -Xaa-Yaa-Zaa-|-(S,diacylglyceryl)Cys-, in which Xaa is hydrophobic (preferably Leu), and Yaa (Ala or Ser) and Zaa (Gly or Ala) have small, neutral side chains.. The protein operates within protein modification; lipoprotein biosynthesis (signal peptide cleavage). In terms of biological role, this protein specifically catalyzes the removal of signal peptides from prolipoproteins. The protein is Lipoprotein signal peptidase of Rickettsia akari (strain Hartford).